A 701-amino-acid chain; its full sequence is Elongation factor G (701 aa).

Positions 11-287 (NKVRNIGIMA…AVVDYLPSPL (277 aa)) constitute a tr-type G domain. GTP contacts are provided by residues 20–27 (AHIDAGKT), 84–88 (DTPGH), and 138–141 (NKMD).

It belongs to the TRAFAC class translation factor GTPase superfamily. Classic translation factor GTPase family. EF-G/EF-2 subfamily.

It localises to the cytoplasm. Its function is as follows. Catalyzes the GTP-dependent ribosomal translocation step during translation elongation. During this step, the ribosome changes from the pre-translocational (PRE) to the post-translocational (POST) state as the newly formed A-site-bound peptidyl-tRNA and P-site-bound deacylated tRNA move to the P and E sites, respectively. Catalyzes the coordinated movement of the two tRNA molecules, the mRNA and conformational changes in the ribosome. The sequence is that of Elongation factor G from Mycobacterium sp. (strain JLS).